Reading from the N-terminus, the 305-residue chain is Sulfate adenylyltransferase subunit 2 (305 aa).

It belongs to the PAPS reductase family. CysD subfamily. Heterodimer composed of CysD, the smaller subunit, and CysN.

It catalyses the reaction sulfate + ATP + H(+) = adenosine 5'-phosphosulfate + diphosphate. It functions in the pathway sulfur metabolism; hydrogen sulfide biosynthesis; sulfite from sulfate: step 1/3. In terms of biological role, with CysN forms the ATP sulfurylase (ATPS) that catalyzes the adenylation of sulfate producing adenosine 5'-phosphosulfate (APS) and diphosphate, the first enzymatic step in sulfur assimilation pathway. APS synthesis involves the formation of a high-energy phosphoric-sulfuric acid anhydride bond driven by GTP hydrolysis by CysN coupled to ATP hydrolysis by CysD. In Pseudomonas fluorescens (strain SBW25), this protein is Sulfate adenylyltransferase subunit 2.